The following is a 283-amino-acid chain: ESX-1 secretion-associated protein EspG1 (283 aa).

It belongs to the EspG family. As to quaternary structure, interacts specifically with ESX-1-dependent PE/PPE proteins. Interacts with PPE68.

The protein localises to the cytoplasm. Functionally, specific chaperone for cognate PE/PPE proteins. Plays an important role in preventing aggregation of PE/PPE dimers. This Mycobacterium tuberculosis (strain ATCC 25618 / H37Rv) protein is ESX-1 secretion-associated protein EspG1.